A 177-amino-acid polypeptide reads, in one-letter code: ATP-dependent protease subunit HslV (177 aa).

The active site involves Thr4. The Na(+) site is built by Ser159, Cys162, and Thr165.

The protein belongs to the peptidase T1B family. HslV subfamily. In terms of assembly, a double ring-shaped homohexamer of HslV is capped on each side by a ring-shaped HslU homohexamer. The assembly of the HslU/HslV complex is dependent on binding of ATP.

Its subcellular location is the cytoplasm. It catalyses the reaction ATP-dependent cleavage of peptide bonds with broad specificity.. Its activity is regulated as follows. Allosterically activated by HslU binding. Its function is as follows. Protease subunit of a proteasome-like degradation complex believed to be a general protein degrading machinery. In Mesorhizobium japonicum (strain LMG 29417 / CECT 9101 / MAFF 303099) (Mesorhizobium loti (strain MAFF 303099)), this protein is ATP-dependent protease subunit HslV.